A 170-amino-acid polypeptide reads, in one-letter code: Protein SprT (170 aa).

Residues 22 to 163 enclose the SprT-like domain; the sequence is LQQANLTLQT…RCRRCGKTLR (142 aa). Position 78 (histidine 78) interacts with Zn(2+). Residue glutamate 79 is part of the active site. Residue histidine 82 coordinates Zn(2+).

The protein belongs to the SprT family. Zn(2+) is required as a cofactor.

The protein resides in the cytoplasm. The sequence is that of Protein SprT from Pectobacterium carotovorum subsp. carotovorum (strain PC1).